Reading from the N-terminus, the 447-residue chain is GTPase Der (447 aa).

EngA-type G domains lie at 3–167 (PVIA…HLAD) and 180–353 (IRLA…ASAN). GTP contacts are provided by residues 9–16 (GRPNVGKS), 56–60 (DTGGF), 119–122 (NKAE), 186–193 (GRPNVGKS), 233–237 (DTAGL), and 298–301 (NKWD). A KH-like domain is found at 354 to 438 (RKMSTPVLTR…PMRIQMKSSH (85 aa)).

This sequence belongs to the TRAFAC class TrmE-Era-EngA-EngB-Septin-like GTPase superfamily. EngA (Der) GTPase family. As to quaternary structure, associates with the 50S ribosomal subunit.

In terms of biological role, GTPase that plays an essential role in the late steps of ribosome biogenesis. The sequence is that of GTPase Der from Polaromonas sp. (strain JS666 / ATCC BAA-500).